The chain runs to 583 residues: Pentatricopeptide repeat-containing protein At3g59040 (583 aa).

PPR repeat units lie at residues 138–172, 173–207, 208–242, 246–280, 281–312, 313–347, 348–382, 383–417, 418–452, and 453–487; these read SEIDFLMLITAYGKLGNFNGAERVLSVLSKMGSTP, NVISYTALMESYGRGGKCNNAEAIFRRMQSSGPEP, SAITYQIILKTFVEGDKFKEAEEVFETLLDEKKSP, DQKMYHMMIYMYKKAGNYEKARKVFSSMVGKGVPQ, STVTYNSLMSFETSYKEVSKIYDQMQRSDIQP, DVVSYALLIKAYGRARREEEALSVFEEMLDAGVRP, THKAYNILLDAFAISGMVEQAKTVFKSMRRDRIFP, DLWSYTTMLSAYVNASDMEGAEKFFKRIKVDGFEP, NIVTYGTLIKGYAKANDVEKMMEVYEKMRLSGIKA, and NQTILTTIMDASGRCKNFGSALGWYKEMESCGVPP. The tract at residues 525–583 is disordered; the sequence is VYGSDDDEEGVEDISSESSDDEDEGDDDDDDARETVLYDKPQEGSLGYGSLQTEELVGL. Residues 528-556 are compositionally biased toward acidic residues; that stretch reads SDDDEEGVEDISSESSDDEDEGDDDDDDA. Residues 557 to 566 are compositionally biased toward basic and acidic residues; sequence RETVLYDKPQ.

The protein belongs to the PPR family. P subfamily.

The protein is Pentatricopeptide repeat-containing protein At3g59040 of Arabidopsis thaliana (Mouse-ear cress).